Consider the following 129-residue polypeptide: MSTSSVRFAFRRFWQSETGPKTVHFWAPTLKWGLVFAGFSDMKRPVEKISGAQNLSLLSTALIWTRWSFVIKPRNILLASVNSFLCLTAGYQLGRIANYRIRNGDSISQLCSYILSGADESKKEITTGR.

Topologically, residues 2–22 (STSSVRFAFRRFWQSETGPKT) are mitochondrial matrix. Residues 23–39 (VHFWAPTLKWGLVFAGF) form a helical membrane-spanning segment. Over 40–54 (SDMKRPVEKISGAQN) the chain is Mitochondrial intermembrane. A helical membrane pass occupies residues 55–71 (LSLLSTALIWTRWSFVI). Topologically, residues 72–74 (KPR) are mitochondrial matrix. The chain crosses the membrane as a helical span at residues 75-91 (NILLASVNSFLCLTAGY). The Mitochondrial intermembrane portion of the chain corresponds to 92–129 (QLGRIANYRIRNGDSISQLCSYILSGADESKKEITTGR).

This sequence belongs to the mitochondrial pyruvate carrier (MPC) (TC 2.A.105) family. In terms of assembly, the functional 150 kDa pyruvate import complex is a heteromer of MPC1 and either MPC2 or MPC3.

It localises to the mitochondrion. The protein localises to the mitochondrion inner membrane. The enzyme catalyses pyruvate(out) + H(+)(out) = pyruvate(in) + H(+)(in). In terms of biological role, mediates the uptake of pyruvate into mitochondria. This chain is Mitochondrial pyruvate carrier 2, found in Saccharomyces cerevisiae (strain ATCC 204508 / S288c) (Baker's yeast).